Consider the following 2472-residue polypeptide: Nuclear receptor corepressor 2 (2472 aa).

Disordered regions lie at residues 1–20 (MSGS…PRYP), 47–168 (RDYT…SRLS), and 190–220 (ISKL…PPIE). The residue at position 18 (Arg18) is an Asymmetric dimethylarginine. Over residues 51 to 60 (SHLSPGSIIQ) the composition is skewed to polar residues. Residues Ser54 and Ser67 each carry the phosphoserine modification. 2 stretches are compositionally biased toward basic and acidic residues: residues 78–88 (RSQELHLRPES) and 96–112 (GKPD…RLEL). 2 positions are modified to phosphoserine: Ser149 and Ser152. A coiled-coil region spans residues 165–207 (SRLSKEELIQNMDRVDREITMVEQQISKLKKKQQQLEEEAAKP). Basic and acidic residues predominate over residues 203–212 (EAAKPPEPEK). Position 215 is a phosphoserine (Ser215). Residues 254 to 312 (LPLYNQPSDTRQYHENIKINQAMRKKLILYFKRRNHARKQWEQRFCQRYDQLMEAWEKK) are interaction with SIN3A/B. The segment at 389-480 (MRQLAVIPPM…YLTKKNENYK (92 aa)) is deacetylase activation domain (DAD). Residues 427–478 (QVTNMWSEQERDTFREKFMQHPKNFGLIASFLERKTVAECVLYYYLTKKNEN) enclose the SANT 1 domain. 1D-myo-inositol 1,4,5,6-tetrakisphosphate-binding residues include Lys449, Tyr470, and Tyr471. Disordered stretches follow at residues 487-618 (YRRR…EMET), 665-1107 (HKLK…RPPI), and 1173-1197 (SATS…YRGS). Residues 492 to 560 (KSQQQQQQQQ…GEDNDEKEAV (69 aa)) adopt a coiled-coil conformation. Ser493 bears the Phosphoserine mark. Positions 494 to 507 (QQQQQQQQQQQQQQ) are enriched in low complexity. Residues 512-548 (SQEEKEEKEKEKEADKEEEKQDAENEKEELSKEKTDD) are compositionally biased toward basic and acidic residues. Phosphothreonine is present on Thr549. At Ser550 the chain carries Phosphoserine. Over residues 592 to 609 (ATPQQSSELASMEMNESS) the composition is skewed to polar residues. The SANT 2 domain maps to 606 to 657 (NESSRWTEEEMETAKKGLLEHGRNWSAIARMVGSKTVSQCKNFYFNYKKRQN). A coiled-coil region spans residues 658–682 (LDEILQQHKLKMEKERNARRKKKKT). Residues 709-718 (NEEELAEEAE) show a composition bias toward acidic residues. The segment covering 739–750 (VNNSSDTESVPS) has biased composition (polar residues). 2 positions are modified to phosphoserine: Ser747 and Ser750. 2 stretches are compositionally biased toward pro residues: residues 773–782 (TQPPVPPPEE) and 789–811 (EPSP…PAAP). Basic and acidic residues-rich tracts occupy residues 831–850 (EDAK…KPEE) and 859–868 (ESVKSDHKEE). Lys878 is subject to N6-acetyllysine. Residues 905–919 (GSSSGATQDSDSSAT) show a composition bias toward low complexity. Ser938 carries the phosphoserine modification. Thr945 carries the post-translational modification Phosphothreonine. Ser955 bears the Phosphoserine mark. Lys958 is subject to N6-acetyllysine. Residues 978–988 (KVHEPPREDTV) are compositionally biased toward basic and acidic residues. The span at 989–1000 (PPKPVPPVPPPT) shows a compositional bias: pro residues. Low complexity predominate over residues 1090-1101 (LPLGLHDSARPV). 2 positions are modified to N6-acetyllysine: Lys1181 and Lys1209. Ser1220 is modified (phosphoserine). Disordered regions lie at residues 1254–1277 (SVSQ…AAPK), 1345–1378 (LKRE…LKLK), and 1410–1443 (PLAP…KHDV). At Thr1350 the chain carries Phosphothreonine. Positions 1359–1368 (DLTETYKPRP) are enriched in basic and acidic residues. A phosphoserine mark is found at Ser1449, Ser1509, and Ser1565. Residues 1479 to 1578 (KSRSGTSSGA…TVPEHHPHPI (100 aa)) form a disordered region. At Arg1624 the chain carries Asymmetric dimethylarginine. Residues 1734–1826 (TAPPPFSSRH…PISPRTQDAL (93 aa)) form a disordered region. The segment covering 1740 to 1753 (SSRHSSSPLSPGGP) has biased composition (low complexity). A phosphoserine mark is found at Ser1746 and Ser1749. Positions 1765–1778 (SERERERERERDKS) are enriched in basic and acidic residues. The span at 1807–1826 (RPASHTHQHSPISPRTQDAL) shows a compositional bias: polar residues. Residue Ser1819 is modified to Phosphoserine. Position 1854 is an omega-N-methylarginine (Arg1854). Disordered regions lie at residues 1857–1878 (RSTS…THCP), 1898–1986 (KETS…KPFS), and 2001–2078 (AGYS…LQTA). Residues 1899–1913 (ETSRVARPERPRVDA) are compositionally biased toward basic and acidic residues. The residue at position 1920 (Lys1920) is an N6-acetyllysine. Positions 1925 to 1938 (EPASSPSKSSEPRS) are enriched in low complexity. Ser1963 carries the phosphoserine modification. An N6-acetyllysine modification is found at Lys1983. Phosphoserine is present on residues Ser2004, Ser2012, Ser2015, Ser2016, and Ser2018. Thr2020 carries the phosphothreonine modification. The span at 2020–2043 (THDKGLSKPLEELEKSHLEGELRH) shows a compositional bias: basic and acidic residues. At Ser2035 the chain carries Phosphoserine. Over residues 2064–2075 (LPESQPSSSPLL) the composition is skewed to low complexity. The tract at residues 2086–2090 (RVVTL) is required for interaction with RARA in the absence of its ligand. The CORNR box of ID1 motif lies at 2094 to 2098 (ISEVI). A disordered region spans residues 2132-2226 (RRPPSDLYLP…GNTSQPPAFF (95 aa)). A phosphoserine mark is found at Ser2161, Ser2181, and Ser2215. The CORNR box of ID2 signature appears at 2296-2300 (LEAII). Residues 2343-2459 (GRSDHALTSP…HHAWDEEPKP (117 aa)) form a disordered region. Position 2371 is a phosphoserine (Ser2371). Residues 2439–2450 (LAAGSGPLAGPH) are compositionally biased toward low complexity.

The protein belongs to the N-CoR nuclear receptor corepressors family. As to quaternary structure, forms a large corepressor complex that contains SIN3A/B and histone deacetylases HDAC1 and HDAC2. This complex associates with the thyroid (TR) and the retinoid acid receptors (RAR) in the absence of ligand, and may stabilize their interaction with TFIIB. Interacts directly with RARA in the absence of ligand; the interaction represses RARA activity. Interacts (isoform SMRT) with HDAC10. Interacts with MINT. Component of the N-Cor repressor complex, at least composed of NCOR1, NCOR2, HDAC3, TBL1X, TBL1R, CORO2A and GPS2. Interacts with CBFA2T3 and ATXN1L. Interacts with RARB; the interaction is weak and does not repress RARB transactivational activity. Interacts (via 1D-myo-inositol 1,4,5,6-tetrakisphosphate) with HDAC3; promoting the histone deacetylase activity of HDAC3. Interacts with HDAC7 and C1D. Interacts with NR4A2; this interaction increases in the absence of PITX3. Interacts with BCL6 (via the BTB domain), required for BCL6 transcriptional repressor activity on a subset of target genes. Forms ternary complexes with BCOR and BCL6 on target gene promoters but, on enhancer elements, interacts with BCL6 and HDAC3 to repress proximal gene expression. May interact with DEAF1. Interacts with RXRA. Interacts with MECP2. Interacts with ZBTB7A. Interacts with AR. Interacts with TBL1Y. Interacts with SANBR (via the BTB domain). Ubiquitous. Also widely expressed in early embryos.

The protein resides in the nucleus. In terms of biological role, transcriptional corepressor that mediates the transcriptional repression activity of some nuclear receptors by promoting chromatin condensation, thus preventing access of the basal transcription. Acts by recruiting chromatin modifiers, such as histone deacetylases HDAC1, HDAC2 and HDAC3. Required to activate the histone deacetylase activity of HDAC3. Involved in the regulation BCL6-dependent of the germinal center (GC) reactions, mainly through the control of the GC B-cells proliferation and survival. Recruited by ZBTB7A to the androgen response elements/ARE on target genes, negatively regulates androgen receptor signaling and androgen-induced cell proliferation. The sequence is that of Nuclear receptor corepressor 2 (Ncor2) from Mus musculus (Mouse).